A 212-amino-acid chain; its full sequence is External core antigen (212 aa).

An N-terminal signal peptide occupies residues 1-19; it reads MQLFPLCLIISCSCPTVQA. The interval 25 to 27 is HBEAG; that stretch reads GWL. Residues 165–212 form a disordered region; it reads NAPILSTLPETTVVRRRGRSPRRRTPSPRRRRSQSPRRRRSQSRESQC. Positions 178–205 are enriched in basic residues; the sequence is VRRRGRSPRRRTPSPRRRRSQSPRRRRS. One copy of the 1; half-length repeat lies at 184–190; the sequence is SPRRRTP. A 3 X 8 AA repeats of S-P-R-R-R-R-S-Q region spans residues 184–206; that stretch reads SPRRRTPSPRRRRSQSPRRRRSQ. 2 consecutive repeat copies span residues 191-198 and 199-206.

This sequence belongs to the orthohepadnavirus precore antigen family. In terms of assembly, homodimerizes. Post-translationally, phosphorylated. In terms of processing, cleaved by host furin.

Its subcellular location is the secreted. The protein resides in the host nucleus. Functionally, may regulate immune response to the intracellular capsid in acting as a T-cell tolerogen, by having an immunoregulatory effect which prevents destruction of infected cells by cytotoxic T-cells. This immune regulation may predispose to chronicity during perinatal infections and prevent severe liver injury during adult infections. The polypeptide is External core antigen (Hepatitis B virus genotype C subtype ayr (isolate Human/Japan/Okamoto/-) (HBV-C)).